The following is a 363-amino-acid chain: Cobalt-precorrin-5B C(1)-methyltransferase (363 aa).

Belongs to the CbiD family.

It catalyses the reaction Co-precorrin-5B + S-adenosyl-L-methionine = Co-precorrin-6A + S-adenosyl-L-homocysteine. It functions in the pathway cofactor biosynthesis; adenosylcobalamin biosynthesis; cob(II)yrinate a,c-diamide from sirohydrochlorin (anaerobic route): step 6/10. In terms of biological role, catalyzes the methylation of C-1 in cobalt-precorrin-5B to form cobalt-precorrin-6A. The protein is Cobalt-precorrin-5B C(1)-methyltransferase of Burkholderia pseudomallei (strain K96243).